Consider the following 340-residue polypeptide: Immunoglobulin-binding protein 1 family member C (340 aa).

Disordered regions lie at residues 223 to 243 and 292 to 340; these read KDSS…PPMK and PEEF…QNMG. Residues 303–314 are compositionally biased toward acidic residues; sequence EDQEKEEEDDEQ. Over residues 318–330 the composition is skewed to basic and acidic residues; sequence RAREWDDWKDTHP.

It belongs to the IGBP1/TAP42 family.

This Homo sapiens (Human) protein is Immunoglobulin-binding protein 1 family member C.